Consider the following 397-residue polypeptide: Elongation factor Tu (397 aa).

Residues Lys10 to Glu206 form the tr-type G domain. Residues Gly19–Thr26 form a G1 region. Gly19–Thr26 serves as a coordination point for GTP. Thr26 serves as a coordination point for Mg(2+). Positions Gly60–Asn64 are G2. Residues Asp81–Gly84 form a G3 region. Residues Asp81–His85 and Asn136–Asp139 contribute to the GTP site. The G4 stretch occupies residues Asn136–Asp139. Residues Ser174–Leu176 form a G5 region.

The protein belongs to the TRAFAC class translation factor GTPase superfamily. Classic translation factor GTPase family. EF-Tu/EF-1A subfamily. Monomer.

It localises to the cytoplasm. The enzyme catalyses GTP + H2O = GDP + phosphate + H(+). Its function is as follows. GTP hydrolase that promotes the GTP-dependent binding of aminoacyl-tRNA to the A-site of ribosomes during protein biosynthesis. In Clostridium botulinum (strain ATCC 19397 / Type A), this protein is Elongation factor Tu.